A 1182-amino-acid polypeptide reads, in one-letter code: Lysine-specific demethylase hairless (1182 aa).

4 disordered regions span residues 227 to 257 (LGLAPGGHLQQACESEGPSLHQRDGETGAGR), 302 to 380 (YQLG…KKTW), 411 to 443 (AGSPEVQGASRGPAPKRPSHPFPGTGRQGARAW), and 507 to 546 (TGHSQKSRRSPLEEKQLEEEDSSATSEEGGGGPGPEASLN). Positions 307–321 (PATPRCPSPGPPTPP) are enriched in pro residues. Positions 561–565 (LCRLL) match the LXXLL motif 1 motif. The C6-type zinc finger occupies 595 to 620 (CSRCHHGLFNTHWRCSHCSHRLCVAC). The interval 697 to 746 (GDGGQQKEPTEKTPPTPQPSCNGDSNRTKDIKEETPDSTESPAEDGAGRS) is disordered. The segment covering 722–731 (NRTKDIKEET) has biased composition (basic and acidic residues). Positions 753-757 (LCELL) match the LXXLL motif 2 motif. Residues 939-1150 (DASRVQNLAS…LSAQLYHQGA (212 aa)) enclose the JmjC domain. Fe cation-binding residues include cysteine 1000, glutamate 1002, and histidine 1118.

The cofactor is Fe(2+). As to expression, expressed predominantly in brain, hair follicles and interfollicular epidermis. No expression in dermis.

The protein resides in the nucleus. It catalyses the reaction N(6),N(6)-dimethyl-L-lysyl(9)-[histone H3] + 2 2-oxoglutarate + 2 O2 = L-lysyl(9)-[histone H3] + 2 formaldehyde + 2 succinate + 2 CO2. Histone demethylase that specifically demethylates both mono- and dimethylated 'Lys-9' of histone H3. May act as a transcription regulator controlling hair biology (via targeting of collagens), neural activity, and cell cycle. This is Lysine-specific demethylase hairless (Hr) from Mus musculus (Mouse).